Here is an 801-residue protein sequence, read N- to C-terminus: Vacuolar transporter chaperone complex subunit 4 (801 aa).

Over 1 to 692 (MPFSKAWRSA…MLKWTEHATR (692 aa)) the chain is Cytoplasmic. Residues Lys215, Arg286, Arg288, Lys312, Lys325, and Arg391 each contribute to the ATP site. Glu441 is a Mn(2+) binding site. Residue Lys473 is part of the active site. A helical transmembrane segment spans residues 693-713 (LGLVGLGVIQFGNSMTLPGDV). Residues 714–723 (TQLSSFWRAN) lie on the Vacuolar side of the membrane. A helical membrane pass occupies residues 724–744 (FHIVLGIALVLVALMTLMYAL). The Cytoplasmic portion of the chain corresponds to 745 to 768 (MTFKARSRRVYARKKIRFDDSWGP). The chain crosses the membrane as a helical span at residues 769 to 789 (TVLTVFLAFGICVIAMMHILG). The Vacuolar segment spans residues 790-801 (RYGPMLTGDDNF).

This sequence belongs to the VTC4 family. As to quaternary structure, the VTC core complex is an integral membrane heterooligomer composed of at least the catalytic subunit vtc4 and the accessory subunits vtc1 and vtc2. vtc1 is a small membrane protein without hydrophilic domain. Vtc2 and vtc4 are related and have 2 hydrophilic domains that face the cytosol, an N-terminal SPX domain and the central core domain. The central core in vtc4 is the catalytic domain. The cofactor is Mn(2+).

It localises to the acidocalcisome membrane. The enzyme catalyses [phosphate](n) + ATP = [phosphate](n+1) + ADP. Activity of the enzyme is Mn(2+)-dependent and enhanced in the presence of pyrophosphate (PPi). Functionally, component of a polyphosphate synthase complex that utilizes ATP to synthesize and translocate polyphosphate to acidocalcisomes in epimastigotes, insect-stages of Trypanosoma brucei. Catalytic subunit of the vacuolar transporter chaperone (VTC) complex. The VTC complex acts as a vacuolar polyphosphate polymerase that catalyzes the synthesis of inorganic polyphosphate (polyP) via transfer of phosphate from ATP to a growing polyP chain, releasing ADP. VTC exposes its catalytic domain vtc4 to the cytosol, where the growing polyP chain winds through a tunnel-shaped pocket, integrating cytoplasmic polymer synthesis with polyP membrane translocation. The VTC complex carries 9 vacuolar transmembrane domains, which are likely to constitute the translocation channel into the organelle lumen. PolyP synthesis is tightly coupled to its transport into the vacuole lumen, in order to avoid otherwise toxic intermediates in the cytosol, and it depends on the proton gradient across the membrane, formed by V-ATPase. The VTC complex also plays a role in vacuolar membrane fusion. Essential for infection and parasite survival in the mammalian host. The sequence is that of Vacuolar transporter chaperone complex subunit 4 from Trypanosoma cruzi (strain CL Brener).